The sequence spans 200 residues: Protein GrpE (200 aa).

This sequence belongs to the GrpE family. Homodimer.

Its subcellular location is the cytoplasm. Participates actively in the response to hyperosmotic and heat shock by preventing the aggregation of stress-denatured proteins, in association with DnaK and GrpE. It is the nucleotide exchange factor for DnaK and may function as a thermosensor. Unfolded proteins bind initially to DnaJ; upon interaction with the DnaJ-bound protein, DnaK hydrolyzes its bound ATP, resulting in the formation of a stable complex. GrpE releases ADP from DnaK; ATP binding to DnaK triggers the release of the substrate protein, thus completing the reaction cycle. Several rounds of ATP-dependent interactions between DnaJ, DnaK and GrpE are required for fully efficient folding. This is Protein GrpE from Shewanella piezotolerans (strain WP3 / JCM 13877).